A 246-amino-acid chain; its full sequence is MFGNAFGVKKRRSDEAEKPFWISYADLMTAMMVLFLVVMVASLSSVTQRIQRAEQGEKTRGQDISRLCERLELHARNVNKTIVVDCHDNRISFGEAGRFDHNQFFLNAEGQKALQDVVPLVLEASNSEEGKKWFKQIVIEGFTDTDGSYLYNLHLSLQRSEWVMCSLLDSRSPLQKNISAEQQLQIRKLFLAGGVSFNNAKESKEASRRVELRMQFFGLKDKRDKADEVDFPPVVNKEVCQLVMPL.

The chain crosses the membrane as a helical span at residues 20 to 40; that stretch reads FWISYADLMTAMMVLFLVVMV. Positions 86–218 constitute an OmpA-like domain; the sequence is CHDNRISFGE…RVELRMQFFG (133 aa).

Belongs to the MotB family.

The protein resides in the cell inner membrane. Component of antiviral defense system Zorya type I, composed of ZorA, ZorB, ZorC and ZorD. Expression of Zorya type I in E.coli (strain MG1655) confers 10,000-fold resistance to phage SECphi27, 100-fold resistance to lambda, and 10-fold resistance to T7. While most T7 infected Zorya-containing cells undergo abortive infection, a minority produce viable phage progeny. These eventually accumulate to a high multiplicity of infection, leading to culture collapse by 2 hours after initial infection. ZorA and ZorB probably assemble in the cell inner membrane and exert their effect there. The chain is Zorya protein ZorB from Escherichia coli O139:H28 (strain E24377A / ETEC).